Here is a 113-residue protein sequence, read N- to C-terminus: Seminal vesicle secretory protein 4 (113 aa).

Positions 1–21 (MNSTSLFLFSLLLLLVTGAIG) are cleaved as a signal peptide. A disordered region spans residues 31–113 (SEETVRESFS…KSRFSQDALE (83 aa)). Composition is skewed to low complexity over residues 38 to 50 (SFSM…MSRS) and 83 to 98 (IISS…GESS).

This sequence belongs to the SVP2/SVP5/SVP6 family. In terms of tissue distribution, testis.

Its subcellular location is the secreted. It is found in the extracellular space. This Mus musculus (Mouse) protein is Seminal vesicle secretory protein 4 (Svs4).